Reading from the N-terminus, the 130-residue chain is Small ribosomal subunit protein uS8 (130 aa).

This sequence belongs to the universal ribosomal protein uS8 family. Part of the 30S ribosomal subunit. Contacts proteins S5 and S12.

One of the primary rRNA binding proteins, it binds directly to 16S rRNA central domain where it helps coordinate assembly of the platform of the 30S subunit. In Shigella boydii serotype 18 (strain CDC 3083-94 / BS512), this protein is Small ribosomal subunit protein uS8.